The chain runs to 601 residues: MVKKMKNIRNFSIIAHIDHGKSTLSDRLIQKCGGLSEREMSDQVLDSMDLEKERGITIKAQSVMIDYKDKNGNVFHLNFIDTPGHVNFSYEVSRSLAACEGALLVVDSSQGVEAQTLANCATALEMKLSIVPVLNKIDLPNSNPEKVAREIKEIIGISALDAIRCSAKTGQGIEELIEQIIKKIPAPDGDEKKPLQALIIDSWFDNYLGVVSLIRIKNGIISKKDKIKVMSTGKTYFVDHLGIFTPKKINKNYLKCGEVGWIVCGIKNISAAPVGDTLTNAKNPAMNMLTGFKKIKPQIYAGLFPVTSDQYEIFRDALGKLSLNDSSLFYEPINSTALGFGFRCGFLGLLHMEIVQARLEREYSLNLISTAPNVIYQIEFNNGEKIYLDTPSNFPVDNKIRKIKEPIVECNILLPPKFLGPVMKLCIKKRGTEINMIYHEQQVSLKYHIPMNEVVLNFFDELKSVSSGYASLEYDFKYFKTVKMVRIDILINSERVDALTVISYYKNAQNRAREIVNKMKELIPRHQFDINIQATINNSIVARSTIKQLRKNVLAKCYGGDISRKKKLLKKQKDGKKRMKKIGNVNMPKTAFLDILNIHKD.

A tr-type G domain is found at 6–188 (KNIRNFSIIA…QIIKKIPAPD (183 aa)). GTP-binding positions include 18–23 (DHGKST) and 135–138 (NKID).

Belongs to the TRAFAC class translation factor GTPase superfamily. Classic translation factor GTPase family. LepA subfamily.

Its subcellular location is the cell membrane. It catalyses the reaction GTP + H2O = GDP + phosphate + H(+). Functionally, required for accurate and efficient protein synthesis under certain stress conditions. May act as a fidelity factor of the translation reaction, by catalyzing a one-codon backward translocation of tRNAs on improperly translocated ribosomes. Back-translocation proceeds from a post-translocation (POST) complex to a pre-translocation (PRE) complex, thus giving elongation factor G a second chance to translocate the tRNAs correctly. Binds to ribosomes in a GTP-dependent manner. This Buchnera aphidicola subsp. Schizaphis graminum (strain Sg) protein is Elongation factor 4.